We begin with the raw amino-acid sequence, 100 residues long: Large ribosomal subunit protein bL27 (100 aa).

Residues 1–9 constitute a propeptide that is removed on maturation; the sequence is MLVMNLQLF.

The protein belongs to the bacterial ribosomal protein bL27 family. In terms of processing, the N-terminus is cleaved by ribosomal processing cysteine protease Prp.

This chain is Large ribosomal subunit protein bL27, found in Clostridium botulinum (strain Hall / ATCC 3502 / NCTC 13319 / Type A).